Consider the following 481-residue polypeptide: Putative amino-acid transporter CPE0389 (481 aa).

Helical transmembrane passes span 7-27 (LGVI…GVYN), 36-56 (ASAG…WFIA), 87-107 (FLMA…YAVL), 127-147 (LSIA…LAGV), 156-176 (IGTI…LFSF), 208-228 (STML…VVSG), 241-261 (FLGF…PLGV), 289-309 (VIMN…WTVM), 338-358 (FSLL…HFAG), 364-384 (MLSI…LYLF), 401-421 (RKYA…LIYA), 422-442 (AGIN…PVFI), and 461-481 (YFAI…FKFM).

This sequence belongs to the amino acid-polyamine-organocation (APC) superfamily. Basic amino acid/polyamine antiporter (APA) (TC 2.A.3.2) family.

Its subcellular location is the cell membrane. Functionally, could be an amino acid transporter. The polypeptide is Putative amino-acid transporter CPE0389 (Clostridium perfringens (strain 13 / Type A)).